A 269-amino-acid chain; its full sequence is 3-methyl-2-oxobutanoate hydroxymethyltransferase (269 aa).

2 residues coordinate Mg(2+): Asp42 and Asp81. 3-methyl-2-oxobutanoate contacts are provided by residues 42–43, Asp81, and Lys111; that span reads DS. A Mg(2+)-binding site is contributed by Glu113. Residue Glu179 is the Proton acceptor of the active site. Residues 250–269 form a disordered region; the sequence is SGEFPRESHSHTEDELDDLY. Basic and acidic residues predominate over residues 252-262; the sequence is EFPRESHSHTE.

This sequence belongs to the PanB family. Homodecamer; pentamer of dimers. Mg(2+) serves as cofactor.

The protein localises to the cytoplasm. It carries out the reaction 3-methyl-2-oxobutanoate + (6R)-5,10-methylene-5,6,7,8-tetrahydrofolate + H2O = 2-dehydropantoate + (6S)-5,6,7,8-tetrahydrofolate. It functions in the pathway cofactor biosynthesis; coenzyme A biosynthesis. Its function is as follows. Catalyzes the reversible reaction in which hydroxymethyl group from 5,10-methylenetetrahydrofolate is transferred onto alpha-ketoisovalerate to form ketopantoate. The sequence is that of 3-methyl-2-oxobutanoate hydroxymethyltransferase from Haloarcula marismortui (strain ATCC 43049 / DSM 3752 / JCM 8966 / VKM B-1809) (Halobacterium marismortui).